Consider the following 196-residue polypeptide: Pycsar effector protein GmPycTM (196 aa).

Transmembrane regions (helical) follow at residues 34–54 (ISFS…SGII), 82–102 (ITTI…TYLF), and 176–196 (VNWL…FLFL).

It is found in the cell inner membrane. Functionally, pycsar (pyrimidine cyclase system for antiphage resistance) provides immunity against bacteriophage. The pyrimidine cyclase (PycC) synthesizes cyclic nucleotides in response to infection; these serve as specific second messenger signals. The signals activate the adjacent effector, leading to bacterial cell death and abortive phage infection. A clade C Pycsar system. In terms of biological role, the effector gene of a two-gene Pycsar system. Expression of this and adjacent uridylate cyclase GmPycC (AC P0DV42) probably confers resistance to bacteriophage. The genes are probably only expressed in response to bacteriophage infection. Probably only responds to cUMP (produced by its cognate NTP cyclase), acts by impairing membrane integrity. This chain is Pycsar effector protein GmPycTM, found in Gulbenkiania mobilis.